A 670-amino-acid chain; its full sequence is E3 ubiquitin-protein ligase MAG2 (670 aa).

Disordered regions lie at residues 1-84 (MVEP…TSTR) and 124-145 (EVER…RDEH). The span at 20–39 (DTLNATSNSSKQGVSNNKRN) shows a compositional bias: polar residues. Residues 51-66 (SDGRDNAHNYHGEGRR) are compositionally biased toward basic and acidic residues. An RING-type zinc finger spans residues 195 to 250 (CSICLSEEPVAPRMVTCGHIFCLSCLLNFFSIEETVKNKETGYSKKKKYKECPLCG). Residues 609-670 (TEDEKASKEN…LFSSNHQALG (62 aa)) form a disordered region. Residues 610–622 (EDEKASKENKEFQ) show a composition bias toward basic and acidic residues. Residues 637–649 (VTDSTDSPPTSNG) show a composition bias toward low complexity.

It belongs to the RNF10 family.

It localises to the cytoplasm. The catalysed reaction is S-ubiquitinyl-[E2 ubiquitin-conjugating enzyme]-L-cysteine + [acceptor protein]-L-lysine = [E2 ubiquitin-conjugating enzyme]-L-cysteine + N(6)-ubiquitinyl-[acceptor protein]-L-lysine.. It functions in the pathway protein modification; protein ubiquitination. Functionally, E3 ubiquitin-protein ligase involved in the degradation of non-functional 18S rRNAs in response to stalled ribosomes. Catalyzes monoubiquitination of RPS3/uS3 in response to stalled ribosomes, initiating a HEL2-dependent response that activates the degradation of non-functional 18S rRNAs. This is E3 ubiquitin-protein ligase MAG2 from Saccharomyces cerevisiae (strain ATCC 204508 / S288c) (Baker's yeast).